The following is an 817-amino-acid chain: Neurabin-2 (817 aa).

2 actin-binding regions span residues 1 to 154 (MMKT…FERS) and 164 to 283 (EAAA…QHRV). Residues 1–165 (MMKTEPRGPG…PAAAGGDKEA (165 aa)) are disordered. A phosphoserine mark is found at S15 and S17. Over residues 44–58 (GAHHKKYGSNVHRIK) the composition is skewed to basic residues. Residues S94, S100, and S116 each carry the phosphoserine modification. Residues 100–371 (SLNENVDHSA…PERGVGNGRA (272 aa)) are interaction with D(2) dopamine receptor. The span at 131–141 (SAQPAPPPHPP) shows a compositional bias: pro residues. The tract at residues 169–255 (RLLRQERAGL…KRSRVFQPPP (87 aa)) is interaction with ADRA2A, ADRA2B and ADRA2C. The residue at position 192 (S192) is a Phosphoserine. T193 carries the phosphothreonine modification. S205 carries the phosphoserine modification. T207 bears the Phosphothreonine mark. Positions 216–447 (EKADSRTGLH…SEEEDPAPSR (232 aa)) are disordered. Positions 252–261 (QPPPPPPPAP) are enriched in pro residues. A compositionally biased stretch (basic and acidic residues) spans 291 to 302 (KPREVRKIKPVE). A compositionally biased stretch (low complexity) spans 333-342 (STVATAASPA). A compositionally biased stretch (basic and acidic residues) spans 344–356 (EEPKAQAAPEKEA). Acidic residues predominate over residues 410–425 (LEEDDEDDEEDGEPPY). The interaction with protein phosphatase 1 stretch occupies residues 417–494 (DEEDGEPPYE…LEKRVERLEL (78 aa)). Phosphoserine is present on S438. The short motif at 447–451 (RKIHF) is the PP1-binding motif element. The segment at 480-525 (SAEYELEKRVERLELFPVELEKDSEGLGISIIGMGAGADMGLEKLG) is interaction with RGS2. One can recognise a PDZ domain in the interval 496-584 (PVELEKDSEG…RVRFMIGRER (89 aa)). The tract at residues 595–816 (IQQTLEQERW…NLQTLRNSNS (222 aa)) is interaction with TGN38. Position 658 is a phosphoserine (S658). Residues 671–788 (FKELQIKHAV…QRRVLEESEL (118 aa)) adopt a coiled-coil conformation.

Interacts with DCLK2. Possibly exists as a homodimer, homotrimer or a homotetramer. Interacts with F-actin, PPP1CA, neurabin-1, TGN38 and D(2) dopamine receptor. Interacts with RGS1, RGS2, RGS4, RGS19 and ADRA1B, ADRA2A, ADRA2B, ADRA2C, CDKN2A, PPP1R2, RASGFR1 and TIAM1. Interacts (via C-terminus) with SPATA13 (via C-terminal tail). Interacts with ADRA2B. Stimulation of D1 (but not D2) dopamine receptors induces Ser-94 phosphorylation. Dephosphorylation of Ser-94 is mediated mainly by PP1 and to a lesser extent by PP2A. Phosphorylation of spinophilin disrupts its association with F-actin, but does not affect its binding to PP1.

Its subcellular location is the cytoplasm. The protein resides in the cytoskeleton. It localises to the nucleus. The protein localises to the cell projection. It is found in the dendritic spine. Its subcellular location is the postsynaptic density. The protein resides in the synapse. It localises to the cell junction. The protein localises to the adherens junction. It is found in the cell membrane. Its subcellular location is the lamellipodium. The protein resides in the filopodium. It localises to the ruffle membrane. In terms of biological role, seems to act as a scaffold protein in multiple signaling pathways. Modulates excitatory synaptic transmission and dendritic spine morphology. Binds to actin filaments (F-actin) and shows cross-linking activity. Binds along the sides of the F-actin. May play an important role in linking the actin cytoskeleton to the plasma membrane at the synaptic junction. Believed to target protein phosphatase 1/PP1 to dendritic spines, which are rich in F-actin, and regulates its specificity toward ion channels and other substrates, such as AMPA-type and NMDA-type glutamate receptors. Plays a role in regulation of G-protein coupled receptor signaling, including dopamine D2 receptors and alpha-adrenergic receptors. May establish a signaling complex for dopaminergic neurotransmission through D2 receptors by linking receptors downstream signaling molecules and the actin cytoskeleton. Binds to ADRA1B and RGS2 and mediates regulation of ADRA1B signaling. May confer to Rac signaling specificity by binding to both, RacGEFs and Rac effector proteins. Probably regulates p70 S6 kinase activity by forming a complex with TIAM1. Required for hepatocyte growth factor (HGF)-induced cell migration. This is Neurabin-2 (PPP1R9B) from Homo sapiens (Human).